The primary structure comprises 159 residues: SsrA-binding protein (159 aa).

The protein belongs to the SmpB family.

It localises to the cytoplasm. Its function is as follows. Required for rescue of stalled ribosomes mediated by trans-translation. Binds to transfer-messenger RNA (tmRNA), required for stable association of tmRNA with ribosomes. tmRNA and SmpB together mimic tRNA shape, replacing the anticodon stem-loop with SmpB. tmRNA is encoded by the ssrA gene; the 2 termini fold to resemble tRNA(Ala) and it encodes a 'tag peptide', a short internal open reading frame. During trans-translation Ala-aminoacylated tmRNA acts like a tRNA, entering the A-site of stalled ribosomes, displacing the stalled mRNA. The ribosome then switches to translate the ORF on the tmRNA; the nascent peptide is terminated with the 'tag peptide' encoded by the tmRNA and targeted for degradation. The ribosome is freed to recommence translation, which seems to be the essential function of trans-translation. The protein is SsrA-binding protein of Saccharophagus degradans (strain 2-40 / ATCC 43961 / DSM 17024).